The chain runs to 163 residues: Putative 4-hydroxy-4-methyl-2-oxoglutarate aldolase (163 aa).

Substrate contacts are provided by residues G75 to L78 and R97. An a divalent metal cation-binding site is contributed by D98.

This sequence belongs to the class II aldolase/RraA-like family. In terms of assembly, homotrimer. It depends on a divalent metal cation as a cofactor.

It catalyses the reaction 4-hydroxy-4-methyl-2-oxoglutarate = 2 pyruvate. It carries out the reaction oxaloacetate + H(+) = pyruvate + CO2. In terms of biological role, catalyzes the aldol cleavage of 4-hydroxy-4-methyl-2-oxoglutarate (HMG) into 2 molecules of pyruvate. Also contains a secondary oxaloacetate (OAA) decarboxylase activity due to the common pyruvate enolate transition state formed following C-C bond cleavage in the retro-aldol and decarboxylation reactions. This is Putative 4-hydroxy-4-methyl-2-oxoglutarate aldolase from Photobacterium profundum (strain SS9).